Consider the following 320-residue polypeptide: uncharacterized protein (320 aa).

This is an uncharacterized protein from Bacillus subtilis (strain 168).